A 615-amino-acid polypeptide reads, in one-letter code: DNA mismatch repair protein MutL (615 aa).

The segment at Phe363–Tyr397 is disordered. Positions Ala364–Pro391 are enriched in low complexity.

Belongs to the DNA mismatch repair MutL/HexB family.

In terms of biological role, this protein is involved in the repair of mismatches in DNA. It is required for dam-dependent methyl-directed DNA mismatch repair. May act as a 'molecular matchmaker', a protein that promotes the formation of a stable complex between two or more DNA-binding proteins in an ATP-dependent manner without itself being part of a final effector complex. The protein is DNA mismatch repair protein MutL of Escherichia coli O9:H4 (strain HS).